A 220-amino-acid chain; its full sequence is LQFTAALAQRLTAEGAELWLDTTARRLLGGPAGVEGVETSRGIIDADAVVVAAGSYSPALTRRFGLRLPIEPVKGYSVSIPLHGIEGAPGMSIIDDARKVVVTRLGEQLRIAGKAEITGFDLRLDERRWRAVREQGLSRFPRLAEQLADAPSQPWAGLRPMTCDGPPILGPTPISGLHLATGVGHLGWTFAAGSARLVADQLEERTCDLDPAPYSLQRYG.

The protein belongs to the DadA oxidoreductase family. It depends on FAD as a cofactor.

This is an uncharacterized protein from Halorhodospira halophila (Ectothiorhodospira halophila).